The following is a 1334-amino-acid chain: SCAR-like protein 2 (1334 aa).

The span at 197–207 shows a compositional bias: basic and acidic residues; sequence KTGNFQREKKS. Disordered stretches follow at residues 197–281, 294–331, 481–516, 568–602, 643–668, 791–832, 931–956, 1000–1026, 1248–1268, and 1280–1304; these read KTGN…SSFS, DTKP…GTSA, PDSS…ADAP, PNQS…SSYT, DKPT…TVES, STSH…KNII, FEKK…YSEK, FQLL…GRSY, SGQQ…DTKN, and RSKT…TANS. Residues 241–256 are compositionally biased toward polar residues; sequence VQLTSRHFATPSTDGR. The span at 310 to 319 shows a compositional bias: low complexity; it reads SNNNLHKLSN. The segment covering 320–330 has biased composition (polar residues); the sequence is TPLHTRLNGTS. A compositionally biased stretch (basic and acidic residues) spans 574–595; the sequence is DSKEIPDSKAEDAPIDSPEKLE. Residues 791–823 are compositionally biased toward polar residues; that stretch reads STSHSSETNQSTVRTPDTVIGQTEGSTGCSTSF. Residues 945 to 956 show a composition bias toward low complexity; that stretch reads SSLFSSSHYSEK. A compositionally biased stretch (basic and acidic residues) spans 1248-1260; it reads SGQQKLNGHEKSK. Residues 1271–1289 form the WH2 domain; the sequence is EREELLQQIRSKTFNLRRT. Residues 1289–1304 show a composition bias toward low complexity; sequence TNASKTNTSSPTTANS.

It belongs to the SCAR/WAVE family.

The protein resides in the cytoplasm. It is found in the cytoskeleton. Its function is as follows. Involved in regulation of actin and microtubule organization. Part of a WAVE complex that activates the Arp2/3 complex. The polypeptide is SCAR-like protein 2 (Oryza sativa subsp. japonica (Rice)).